The primary structure comprises 140 residues: uncharacterized protein (140 aa).

Residue 18–25 (GTNGSGKS) coordinates ATP.

This is an uncharacterized protein from Haemophilus influenzae (strain ATCC 51907 / DSM 11121 / KW20 / Rd).